The sequence spans 1355 residues: Probable major glycoprotein (1355 aa).

A signal peptide spans 1–16 (MKKTMLAIILIPLVYA). N-linked (GlcNAc...) asparagine; by host glycosylation is found at N81, N112, N129, N169, N173, N192, N542, N655, N682, N744, N780, N811, N815, N860, N865, N882, N895, N1213, N1225, N1267, and N1274. The stretch at 1245 to 1299 (QIVSMEMEIQDLKLELIQLQKINTSVHMENITGDIDAMKATIEEYRAEMAKLRVT) forms a coiled coil. The helical transmembrane segment at 1308–1328 (FIYAILGVIAIGALIAIIFMA) threads the bilayer.

It is found in the host membrane. This is Probable major glycoprotein (ORF46) from Ictaluridae (bullhead catfishes).